The following is a 681-amino-acid chain: Sterile alpha motif domain-containing protein 11 (681 aa).

Disordered regions lie at residues 41–77 (RNLK…EDGP), 212–234 (YHLG…HLPS), 251–307 (GPSG…APHV), and 407–498 (LLAL…GAEG). Residue Lys-72 forms a Glycyl lysine isopeptide (Lys-Gly) (interchain with G-Cter in SUMO2) linkage. Residues 219–234 (HGEDPPWHDPPHHLPS) are compositionally biased toward basic and acidic residues. Residues 412-423 (PQGPPGSGPPTP) are compositionally biased toward pro residues. Thr-485 bears the Phosphothreonine mark. The region spanning 543–608 (WTVDDVCSFV…AQVARRLGRV (66 aa)) is the SAM domain. The segment at 625–681 (LRAPERELGTGEQPLSPTTATSPYGGGHALAGQTSPKQENGTLALLPGAPDPSQPLC) is disordered. Composition is skewed to polar residues over residues 637–646 (QPLSPTTATS) and 656–665 (GQTSPKQENG). Ser-640 carries the phosphoserine modification.

As to quaternary structure, self-associates. Component of a Polycomb group (PcG) multiprotein PRC1-like complex. Interacts with SAMD7 and PHC2. Expressed in the outer and inner nuclear layers, ganglion cell layer and rod photoreceptors of the retina (at protein level). Widely expressed, showing the highest expression in kidney, prostate and retina.

The protein resides in the nucleus. Functionally, component of a Polycomb group (PcG) multiprotein PRC1-like complex, essential for establishing rod photoreceptor cell identity and function by silencing nonrod gene expression in developing rod photoreceptor cells. This is Sterile alpha motif domain-containing protein 11 (SAMD11) from Homo sapiens (Human).